Reading from the N-terminus, the 402-residue chain is Formate-dependent phosphoribosylglycinamide formyltransferase (402 aa).

Residues 25 to 26 (EL) and glutamate 85 contribute to the N(1)-(5-phospho-beta-D-ribosyl)glycinamide site. ATP contacts are provided by residues arginine 118, lysine 159, 164 to 169 (SSGKGQ), 199 to 202 (EQFV), and glutamate 207. The region spanning 123 to 318 (RLASEELGLP…EFELHAKAVL (196 aa)) is the ATP-grasp domain. Glutamate 277 and glutamate 289 together coordinate Mg(2+). Residues aspartate 296, lysine 365, and 372–373 (RR) each bind N(1)-(5-phospho-beta-D-ribosyl)glycinamide.

It belongs to the PurK/PurT family. As to quaternary structure, homodimer.

The catalysed reaction is N(1)-(5-phospho-beta-D-ribosyl)glycinamide + formate + ATP = N(2)-formyl-N(1)-(5-phospho-beta-D-ribosyl)glycinamide + ADP + phosphate + H(+). The protein operates within purine metabolism; IMP biosynthesis via de novo pathway; N(2)-formyl-N(1)-(5-phospho-D-ribosyl)glycinamide from N(1)-(5-phospho-D-ribosyl)glycinamide (formate route): step 1/1. Functionally, involved in the de novo purine biosynthesis. Catalyzes the transfer of formate to 5-phospho-ribosyl-glycinamide (GAR), producing 5-phospho-ribosyl-N-formylglycinamide (FGAR). Formate is provided by PurU via hydrolysis of 10-formyl-tetrahydrofolate. The polypeptide is Formate-dependent phosphoribosylglycinamide formyltransferase (Corynebacterium efficiens (strain DSM 44549 / YS-314 / AJ 12310 / JCM 11189 / NBRC 100395)).